Reading from the N-terminus, the 220-residue chain is Protein GrpE (220 aa).

Composition is skewed to polar residues over residues 1–12 and 50–63; these read MEQGDKQATYNE and AASTTADPAEQTSV. The interval 1 to 67 is disordered; the sequence is MEQGDKQATY…AEQTSVEAEE (67 aa).

Belongs to the GrpE family. Homodimer.

The protein resides in the cytoplasm. Functionally, participates actively in the response to hyperosmotic and heat shock by preventing the aggregation of stress-denatured proteins, in association with DnaK and GrpE. It is the nucleotide exchange factor for DnaK and may function as a thermosensor. Unfolded proteins bind initially to DnaJ; upon interaction with the DnaJ-bound protein, DnaK hydrolyzes its bound ATP, resulting in the formation of a stable complex. GrpE releases ADP from DnaK; ATP binding to DnaK triggers the release of the substrate protein, thus completing the reaction cycle. Several rounds of ATP-dependent interactions between DnaJ, DnaK and GrpE are required for fully efficient folding. The chain is Protein GrpE from Geobacillus thermodenitrificans (strain NG80-2).